A 500-amino-acid polypeptide reads, in one-letter code: Cytochrome P450 2D27 (500 aa).

Residue C446 participates in heme binding.

The protein belongs to the cytochrome P450 family. The cofactor is heme. As to expression, expressed in liver, but not in kidney, small intestine, and brain.

The protein localises to the endoplasmic reticulum membrane. It localises to the microsome membrane. Its function is as follows. Has bufuralol 1'-hydroxylase and debrisoquine 4-hydroxylase activities. This chain is Cytochrome P450 2D27 (CYP2D27), found in Mesocricetus auratus (Golden hamster).